Reading from the N-terminus, the 426-residue chain is MTATNELLQDLKARGLIAQCTADEELAEHLSTDCRTLYCGFDPTADSLHIGSLVPLLVLKRFQQAGHKPLALVGGATGLIGDPSFKAAERQLNTNEVVGDWVNKIKAQVSAFVDFTEEKNGAEVVNNLDWIGQINVIEFMRDVGKHFSVNAMIQKESVKQRIDREGSGISFTEFSYMLLQSYDFAALNKAKECTLQIGGSDQWGNITGGIDLTRRMNRNKVFGLTLPLVTKSDGTKFGKTESGTIWLDSNKTSPYAFYQFWLGTADADVYNFLRFFTFLTVEEIAAVEESDKSVQGRPEGQGILAREVTRLVHGEEGLASAERITKALFSGDLSSLTETDLAQLALDGLPSTELEASEQTIVEVLTQSELAKSNKMAREFIGNGAVSVNGEKVADTEAVLKKEDALFGKYSVIKRGKKLFNLYIWK.

Y38 is an L-tyrosine binding site. The 'HIGH' region signature appears at 43 to 52 (PTADSLHIGS). Residues Y176 and Q180 each coordinate L-tyrosine. A 'KMSKS' region motif is present at residues 236-240 (KFGKT). K239 contacts ATP. Positions 359–426 (QTIVEVLTQS…KKLFNLYIWK (68 aa)) constitute an S4 RNA-binding domain.

Belongs to the class-I aminoacyl-tRNA synthetase family. TyrS type 1 subfamily. In terms of assembly, homodimer.

The protein localises to the cytoplasm. The catalysed reaction is tRNA(Tyr) + L-tyrosine + ATP = L-tyrosyl-tRNA(Tyr) + AMP + diphosphate + H(+). Catalyzes the attachment of tyrosine to tRNA(Tyr) in a two-step reaction: tyrosine is first activated by ATP to form Tyr-AMP and then transferred to the acceptor end of tRNA(Tyr). This Aliivibrio fischeri (strain ATCC 700601 / ES114) (Vibrio fischeri) protein is Tyrosine--tRNA ligase.